Consider the following 232-residue polypeptide: Ribose-5-phosphate isomerase A (232 aa).

Residues 31-34 (TGST), 88-91 (DGAD), and 101-104 (KGGG) contribute to the substrate site. Glu-110 functions as the Proton acceptor in the catalytic mechanism. Lys-128 lines the substrate pocket.

This sequence belongs to the ribose 5-phosphate isomerase family. In terms of assembly, homodimer.

The enzyme catalyses aldehydo-D-ribose 5-phosphate = D-ribulose 5-phosphate. It functions in the pathway carbohydrate degradation; pentose phosphate pathway; D-ribose 5-phosphate from D-ribulose 5-phosphate (non-oxidative stage): step 1/1. Its function is as follows. Catalyzes the reversible conversion of ribose-5-phosphate to ribulose 5-phosphate. The polypeptide is Ribose-5-phosphate isomerase A (Lactobacillus johnsonii (strain CNCM I-12250 / La1 / NCC 533)).